Consider the following 547-residue polypeptide: MATMVPSVLWPRACWTLLVCCLLTPGVQGQEFLLRVEPQNPVLSAGGSLFVNCSTDCPSSEKIALETSLSKELVASGMGWAAFNLSNVTGNSRILCSVYCNGSQITGSSNITVYRLPERVELAPLPPWQRVGQNFTLRCQVEGGSPRTSLTVVLLRWEEELSRQPAVEEPAEVTATVLASRDDHGAPFSCRTELDMQPQGLGLFVNTSAPRQLRTFVLPVTPPRLVAPRFLEVETSWPVDCTLDGLFPASEAQVYLALGDQMLNATVMNHGDTLTATATATARADQEGAREIVCNVTLGGERREARENLTVFSFLGPTVNLSEPTAPEGSTVTVSCMAGARVQVTLDGVPAAAPGQPAQLQLNATESDDRRSFFCSATLEVDGEFLHRNSSVQLRVLYGPKIDRATCPQHLKWKDKTTHVLQCQARGNPYPELRCLKEGSSREVPVGIPFFVNVTHNGTYQCQASSSRGKYTLVVVMDIEAGSSHFVPVFVAVLLTLGVVTIVLALMYVFREHKRSGSYHVREESTYLPLTSMQPTQAMGEEPSRAE.

The N-terminal stretch at 1 to 29 is a signal peptide; the sequence is MATMVPSVLWPRACWTLLVCCLLTPGVQG. Topologically, residues 30–485 are extracellular; it reads QEFLLRVEPQ…VMDIEAGSSH (456 aa). The Ig-like C2-type 1 domain maps to 46 to 103; the sequence is GGSLFVNCSTDCPSSEKIALETSLSKELVASGMGWAAFNLSNVTGNSRILCSVYCNGS. N-linked (GlcNAc...) asparagine glycans are attached at residues N52, N84, N87, N101, N110, and N134. Intrachain disulfides connect C53-C96 and C57-C100. An Ig-like C2-type 2 domain is found at 132-197; the sequence is GQNFTLRCQV…FSCRTELDMQ (66 aa). C139 and C190 form a disulfide bridge. Residues N206, N264, N295, N308, N320, N363, N389, N453, and N457 are each glycosylated (N-linked (GlcNAc...) asparagine). The Ig-like C2-type 3 domain occupies 234–301; that stretch reads ETSWPVDCTL…IVCNVTLGGE (68 aa). A disulfide bridge connects residues C241 and C294. The Ig-like C2-type 4 domain maps to 329 to 382; it reads GSTVTVSCMAGARVQVTLDGVPAAAPGQPAQLQLNATESDDRRSFFCSATLEVD. C336 and C375 are oxidised to a cystine. In terms of domain architecture, Ig-like C2-type 5 spans 416-469; sequence KTTHVLQCQARGNPYPELRCLKEGSSREVPVGIPFFVNVTHNGTYQCQASSSRG. Residues C423 and C462 are joined by a disulfide bond. The chain crosses the membrane as a helical span at residues 486 to 510; that stretch reads FVPVFVAVLLTLGVVTIVLALMYVF. Topologically, residues 511-547 are cytoplasmic; sequence REHKRSGSYHVREESTYLPLTSMQPTQAMGEEPSRAE.

It belongs to the immunoglobulin superfamily. ICAM family. As to quaternary structure, interacts with moesin/MSN. In terms of processing, upon stimulation by a physiologic stimuli becomes rapidly and transiently phosphorylated on serine residues. In terms of tissue distribution, leukocytes.

The protein localises to the membrane. In terms of biological role, ICAM proteins are ligands for the leukocyte adhesion protein LFA-1 (integrin alpha-L/beta-2). ICAM3 is also a ligand for integrin alpha-D/beta-2. In association with integrin alpha-L/beta-2, contributes to apoptotic neutrophil phagocytosis by macrophages. The protein is Intercellular adhesion molecule 3 (ICAM3) of Pan troglodytes (Chimpanzee).